Consider the following 453-residue polypeptide: Beta-agarase AgaB34 (453 aa).

The signal sequence occupies residues 1–23 (MKGFTKHSILMACSIGLAINATA). The region spanning 24 to 301 (ADWDNIPIPA…WIRVYKPTGG (278 aa)) is the GH16 domain. Glutamate 147 serves as the catalytic Nucleophile. Catalysis depends on glutamate 152, which acts as the Proton donor. The Ricin B-type lectin domain occupies 313–453 (PSGYTNLQLA…GATNQRFKFL (141 aa)). Disulfide bonds link cysteine 327–cysteine 346, cysteine 375–cysteine 394, and cysteine 423–cysteine 442.

It belongs to the glycosyl hydrolase 16 family.

It is found in the secreted. It catalyses the reaction Hydrolysis of (1-&gt;4)-beta-D-galactosidic linkages in agarose, giving the tetramer as the predominant product.. The sequence is that of Beta-agarase AgaB34 from Agarivorans albus.